Reading from the N-terminus, the 104-residue chain is Large ribosomal subunit protein bL21 (104 aa).

This sequence belongs to the bacterial ribosomal protein bL21 family. Part of the 50S ribosomal subunit. Contacts protein L20.

Functionally, this protein binds to 23S rRNA in the presence of protein L20. The chain is Large ribosomal subunit protein bL21 from Clostridium botulinum (strain 657 / Type Ba4).